The sequence spans 216 residues: Thymidine kinase (216 aa).

Residues G9 to S16 and D86 to Q89 contribute to the ATP site. The active-site Proton acceptor is the E87.

This sequence belongs to the thymidine kinase family. Homotetramer.

It is found in the cytoplasm. The enzyme catalyses thymidine + ATP = dTMP + ADP + H(+). The protein is Thymidine kinase of Streptomyces coelicolor (strain ATCC BAA-471 / A3(2) / M145).